A 213-amino-acid chain; its full sequence is Thymidylate kinase (213 aa).

10 to 17 (GLEGAGKT) provides a ligand contact to ATP.

Belongs to the thymidylate kinase family.

The catalysed reaction is dTMP + ATP = dTDP + ADP. Phosphorylation of dTMP to form dTDP in both de novo and salvage pathways of dTTP synthesis. The polypeptide is Thymidylate kinase (Escherichia coli O7:K1 (strain IAI39 / ExPEC)).